A 310-amino-acid polypeptide reads, in one-letter code: Succinate dehydrogenase assembly factor 2, mitochondrial (310 aa).

Residues 35–48 (LKDGSDEASPEVKA) show a composition bias toward basic and acidic residues. The interval 35–67 (LKDGSDEASPEVKAHRANQANKAPNQFVPNTTS) is disordered. Polar residues predominate over residues 52-67 (NQANKAPNQFVPNTTS).

This sequence belongs to the SDHAF2 family. As to quaternary structure, interacts with the flavoprotein subunit within the SDH catalytic dimer.

It localises to the mitochondrion matrix. Its function is as follows. Plays an essential role in the assembly of succinate dehydrogenase (SDH), an enzyme complex (also referred to as respiratory complex II) that is a component of both the tricarboxylic acid (TCA) cycle and the mitochondrial electron transport chain, and which couples the oxidation of succinate to fumarate with the reduction of ubiquinone (coenzyme Q) to ubiquinol. Required for flavinylation (covalent attachment of FAD) of the flavoprotein subunit of the SDH catalytic dimer. This is Succinate dehydrogenase assembly factor 2, mitochondrial from Penicillium rubens (strain ATCC 28089 / DSM 1075 / NRRL 1951 / Wisconsin 54-1255) (Penicillium chrysogenum).